The chain runs to 186 residues: Ribosome-recycling factor (186 aa).

This sequence belongs to the RRF family.

It localises to the cytoplasm. Responsible for the release of ribosomes from messenger RNA at the termination of protein biosynthesis. May increase the efficiency of translation by recycling ribosomes from one round of translation to another. The protein is Ribosome-recycling factor of Cupriavidus pinatubonensis (strain JMP 134 / LMG 1197) (Cupriavidus necator (strain JMP 134)).